Reading from the N-terminus, the 243-residue chain is Putative ABC transporter arginine-binding protein 2 (243 aa).

The N-terminal stretch at Met1 to Ala19 is a signal peptide.

This sequence belongs to the bacterial solute-binding protein 3 family. In terms of assembly, the complex is composed of two ATP-binding proteins (ArtP), two transmembrane proteins (ArtM and ArtQ) and two solute-binding proteins (ArtJ and ArtI).

Its subcellular location is the periplasm. In terms of biological role, part of the ABC transporter complex ArtPIQMJ involved in arginine transport. In Escherichia coli (strain K12), this protein is Putative ABC transporter arginine-binding protein 2 (artI).